The following is a 279-amino-acid chain: Thymidylate synthase 1 (279 aa).

141 to 142 (RR) is a dUMP binding site. Cys-161 (nucleophile) is an active-site residue. DUMP is bound by residues 181-184 (RSND), Asn-192, and 222-224 (HVY). Asp-184 contacts (6R)-5,10-methylene-5,6,7,8-tetrahydrofolate. Ala-278 provides a ligand contact to (6R)-5,10-methylene-5,6,7,8-tetrahydrofolate.

This sequence belongs to the thymidylate synthase family. Bacterial-type ThyA subfamily. As to quaternary structure, homodimer.

It is found in the cytoplasm. It carries out the reaction dUMP + (6R)-5,10-methylene-5,6,7,8-tetrahydrofolate = 7,8-dihydrofolate + dTMP. The protein operates within pyrimidine metabolism; dTTP biosynthesis. Its function is as follows. Catalyzes the reductive methylation of 2'-deoxyuridine-5'-monophosphate (dUMP) to 2'-deoxythymidine-5'-monophosphate (dTMP) while utilizing 5,10-methylenetetrahydrofolate (mTHF) as the methyl donor and reductant in the reaction, yielding dihydrofolate (DHF) as a by-product. This enzymatic reaction provides an intracellular de novo source of dTMP, an essential precursor for DNA biosynthesis. The chain is Thymidylate synthase 1 from Bacillus spizizenii (strain ATCC 23059 / NRRL B-14472 / W23) (Bacillus subtilis subsp. spizizenii).